A 249-amino-acid polypeptide reads, in one-letter code: Triosephosphate isomerase (249 aa).

Residue 9-11 (NWK) participates in substrate binding. Histidine 94 serves as the catalytic Electrophile. Glutamate 166 functions as the Proton acceptor in the catalytic mechanism. Substrate is bound by residues glycine 172, serine 211, and 232 to 233 (GG).

Belongs to the triosephosphate isomerase family. In terms of assembly, homodimer.

It localises to the cytoplasm. It carries out the reaction D-glyceraldehyde 3-phosphate = dihydroxyacetone phosphate. The protein operates within carbohydrate biosynthesis; gluconeogenesis. It functions in the pathway carbohydrate degradation; glycolysis; D-glyceraldehyde 3-phosphate from glycerone phosphate: step 1/1. Involved in the gluconeogenesis. Catalyzes stereospecifically the conversion of dihydroxyacetone phosphate (DHAP) to D-glyceraldehyde-3-phosphate (G3P). This is Triosephosphate isomerase from Chromohalobacter salexigens (strain ATCC BAA-138 / DSM 3043 / CIP 106854 / NCIMB 13768 / 1H11).